The primary structure comprises 446 residues: MSAVTSDTITFECETGNYHTFCPISCVAWLYQKIEDSFFLVIGTKTCGYFLQNALGVMIFAEPRYAMAELEEGDISAQLNDYKELTRLCNQIKKDRNPSVIVWIGTCTTEIIKMDLEGMAPKIELEINTPIVVARANGLDYAFTQGEDTVLAAMVERCPAKISLDSNSNKESKNPESEQAPLVLFGSLPSTVASQLNLELKRQGINVSGWLPAQRYTDLPILEKGTYVCGINPFLSRTATILMRRRKCKLIGAPFPIGPDGTRAWIEKICSVFNIQPQNLDERENQVWQSLEDYLQLVRGKSVFFMGDNLLEISLARFLIKCGMIVYEIGIPYMDKRYQAAELALLEKHCNDMNVPMPRIVEKPDNYNQIQRIKELQPDLAITGMAHANPLEARGISTKWSVEFTFAQIHGFTNARDILELVTRPLRRNNSLEGLGWNSLVKENIK.

The [4Fe-4S] cluster site is built by C22, C47, and C107.

It belongs to the BchN/ChlN family. As to quaternary structure, protochlorophyllide reductase is composed of three subunits; ChlL, ChlN and ChlB. Forms a heterotetramer of two ChlB and two ChlN subunits. [4Fe-4S] cluster serves as cofactor.

The protein resides in the plastid. It localises to the chloroplast. It carries out the reaction chlorophyllide a + oxidized 2[4Fe-4S]-[ferredoxin] + 2 ADP + 2 phosphate = protochlorophyllide a + reduced 2[4Fe-4S]-[ferredoxin] + 2 ATP + 2 H2O. Its pathway is porphyrin-containing compound metabolism; chlorophyll biosynthesis (light-independent). Its function is as follows. Component of the dark-operative protochlorophyllide reductase (DPOR) that uses Mg-ATP and reduced ferredoxin to reduce ring D of protochlorophyllide (Pchlide) to form chlorophyllide a (Chlide). This reaction is light-independent. The NB-protein (ChlN-ChlB) is the catalytic component of the complex. The sequence is that of Light-independent protochlorophyllide reductase subunit N from Mesostigma viride (Green alga).